The following is a 201-amino-acid chain: Imidazole glycerol phosphate synthase subunit HisH (201 aa).

The Glutamine amidotransferase type-1 domain occupies 1–201 (MIAIIDYGAG…LLKRYEEMIR (201 aa)). The active-site Nucleophile is C79. Residues H181 and E183 contribute to the active site.

In terms of assembly, heterodimer of HisH and HisF.

It localises to the cytoplasm. It carries out the reaction 5-[(5-phospho-1-deoxy-D-ribulos-1-ylimino)methylamino]-1-(5-phospho-beta-D-ribosyl)imidazole-4-carboxamide + L-glutamine = D-erythro-1-(imidazol-4-yl)glycerol 3-phosphate + 5-amino-1-(5-phospho-beta-D-ribosyl)imidazole-4-carboxamide + L-glutamate + H(+). The enzyme catalyses L-glutamine + H2O = L-glutamate + NH4(+). It participates in amino-acid biosynthesis; L-histidine biosynthesis; L-histidine from 5-phospho-alpha-D-ribose 1-diphosphate: step 5/9. In terms of biological role, IGPS catalyzes the conversion of PRFAR and glutamine to IGP, AICAR and glutamate. The HisH subunit catalyzes the hydrolysis of glutamine to glutamate and ammonia as part of the synthesis of IGP and AICAR. The resulting ammonia molecule is channeled to the active site of HisF. In Oceanobacillus iheyensis (strain DSM 14371 / CIP 107618 / JCM 11309 / KCTC 3954 / HTE831), this protein is Imidazole glycerol phosphate synthase subunit HisH.